The chain runs to 289 residues: Glycine--tRNA ligase alpha subunit (289 aa).

This sequence belongs to the class-II aminoacyl-tRNA synthetase family. Tetramer of two alpha and two beta subunits.

It localises to the cytoplasm. It catalyses the reaction tRNA(Gly) + glycine + ATP = glycyl-tRNA(Gly) + AMP + diphosphate. The sequence is that of Glycine--tRNA ligase alpha subunit from Nitratidesulfovibrio vulgaris (strain ATCC 29579 / DSM 644 / CCUG 34227 / NCIMB 8303 / VKM B-1760 / Hildenborough) (Desulfovibrio vulgaris).